The sequence spans 442 residues: Proline--tRNA ligase (442 aa).

It belongs to the class-II aminoacyl-tRNA synthetase family. ProS type 2 subfamily. As to quaternary structure, homodimer.

It is found in the cytoplasm. It carries out the reaction tRNA(Pro) + L-proline + ATP = L-prolyl-tRNA(Pro) + AMP + diphosphate. Catalyzes the attachment of proline to tRNA(Pro) in a two-step reaction: proline is first activated by ATP to form Pro-AMP and then transferred to the acceptor end of tRNA(Pro). In Brucella canis (strain ATCC 23365 / NCTC 10854 / RM-666), this protein is Proline--tRNA ligase.